A 65-amino-acid polypeptide reads, in one-letter code: Photosystem II reaction center protein J (65 aa).

The chain crosses the membrane as a helical span at residues 35–55 (LWLVATAGGTAVIFVLGIFFY).

Belongs to the PsbJ family. PSII is composed of 1 copy each of membrane proteins PsbA, PsbB, PsbC, PsbD, PsbE, PsbF, PsbH, PsbI, PsbJ, PsbK, PsbL, PsbM, PsbT, PsbX, PsbY, Psb30/Ycf12, peripheral proteins PsbO, CyanoQ (PsbQ), PsbU, PsbV and a large number of cofactors. It forms dimeric complexes.

The protein localises to the cellular thylakoid membrane. Its function is as follows. One of the components of the core complex of photosystem II (PSII). PSII is a light-driven water:plastoquinone oxidoreductase that uses light energy to abstract electrons from H(2)O, generating O(2) and a proton gradient subsequently used for ATP formation. It consists of a core antenna complex that captures photons, and an electron transfer chain that converts photonic excitation into a charge separation. This Prochlorococcus marinus (strain NATL2A) protein is Photosystem II reaction center protein J.